The chain runs to 644 residues: Beta-mannosyltransferase 2 (644 aa).

The Cytoplasmic segment spans residues 1 to 6 (MRTRLN). A helical transmembrane segment spans residues 7 to 27 (FLLLCIASVLSVIWIGVLLTW). The Extracellular segment spans residues 28-644 (NDNNLGGISL…NDKKDLKIRQ (617 aa)). N-linked (GlcNAc...) asparagine glycosylation occurs at asparagine 484. The stretch at 512–644 (TRGEAERRRR…NDKKDLKIRQ (133 aa)) forms a coiled coil. The tract at residues 517–644 (ERRRRVAEER…NDKKDLKIRQ (128 aa)) is disordered.

The protein belongs to the BMT family.

It is found in the membrane. Beta-mannosyltransferase involved in cell wall biosynthesis. Initiates the beta-mannosylation of core N-linked glycans. The sequence is that of Beta-mannosyltransferase 2 (BMT2) from Komagataella phaffii (strain GS115 / ATCC 20864) (Yeast).